Consider the following 469-residue polypeptide: MTSTSSENAPDHDHDHDASSPAPATATAAALPPMIPACDPHDGPACLELIEVLTTRAAAVQRRVLAEVLAMNTGTDYLRRFLGDEVVAAAGGEDELAAAFKERVPVVEYEDVKPYIERIANGAPSSLISSKPITELLTSSGTSGGQPKLMPATEEELDRKTFLYNLLVPVMNKYVEGLDEGRGMYLLFVKPEITTASGMVARPVLTSYYKSRHFRRRPDSPYTRYTSPDAAILCPDSRQSMYAQLLCGLARRGEVLRVGAVFASAFLRAVKFLEGHWRALCADIRAGRADPAVVTDAACRGAVDAVLAARADPDLADAIAAECGGASWRGIVRRLWPRTKYIDVIVTGSMAQYIPLLEFYGGGLPLVSTMYASSESYFGINLRPLDPPEEVVYTLLPNMCYYEFIKVEKDGDGEKVRDGEVVDLVGVEVGAYYELVVTTFTGERVCSPFDFFPTSCMGLSTPSDRKING.

The disordered stretch occupies residues 1 to 26; that stretch reads MTSTSSENAPDHDHDHDASSPAPATA. Basic and acidic residues predominate over residues 9–18; sequence APDHDHDHDA.

This sequence belongs to the IAA-amido conjugating enzyme family.

May catalyze the synthesis of indole-3-acetic acid (IAA)-amino acid conjugates, providing a mechanism for the plant to cope with the presence of excess auxin. The sequence is that of Probable indole-3-acetic acid-amido synthetase GH3.13 (GH3.13) from Oryza sativa subsp. japonica (Rice).